The primary structure comprises 139 residues: Large ribosomal subunit protein uL16 (139 aa).

Belongs to the universal ribosomal protein uL16 family. As to quaternary structure, part of the 50S ribosomal subunit.

Its function is as follows. Binds 23S rRNA and is also seen to make contacts with the A and possibly P site tRNAs. The polypeptide is Large ribosomal subunit protein uL16 (Synechocystis sp. (strain ATCC 27184 / PCC 6803 / Kazusa)).